Here is a 442-residue protein sequence, read N- to C-terminus: Methionine aminopeptidase 2 (442 aa).

The disordered stretch occupies residues M1–R81. Basic residues predominate over residues P56–A72. H196 lines the substrate pocket. Residues D216, D227, and H296 each contribute to the a divalent metal cation site. H304 contributes to the substrate binding site. Positions 329 and 423 each coordinate a divalent metal cation.

Belongs to the peptidase M24A family. Methionine aminopeptidase eukaryotic type 2 subfamily. Requires Co(2+) as cofactor. The cofactor is Zn(2+). Mn(2+) is required as a cofactor. It depends on Fe(2+) as a cofactor.

It localises to the cytoplasm. The enzyme catalyses Release of N-terminal amino acids, preferentially methionine, from peptides and arylamides.. Its function is as follows. Cotranslationally removes the N-terminal methionine from nascent proteins. The N-terminal methionine is often cleaved when the second residue in the primary sequence is small and uncharged (Met-Ala-, Cys, Gly, Pro, Ser, Thr, or Val). This chain is Methionine aminopeptidase 2, found in Verticillium alfalfae (strain VaMs.102 / ATCC MYA-4576 / FGSC 10136) (Verticillium wilt of alfalfa).